The chain runs to 120 residues: Crustacean hyperglycemic hormones 2 (120 aa).

An N-terminal signal peptide occupies residues 1 to 27 (MIAFHMVWSALLASLLLLLLAPSASPV). 3 disulfides stabilise this stretch: Cys53–Cys89, Cys69–Cys85, and Cys72–Cys98. Position 118 is a valine amide (Val118).

Belongs to the arthropod CHH/MIH/GIH/VIH hormone family.

It is found in the secreted. Hormone found in the sinus gland of isopods and decapods which controls the blood sugar level. Has a secretagogue action over the amylase released from the midgut gland. May act as a stress hormone and may be involved in the control of molting and reproduction. The chain is Crustacean hyperglycemic hormones 2 from Penaeus japonicus (Kuruma prawn).